A 426-amino-acid polypeptide reads, in one-letter code: Spermatogenesis-associated protein 2-like protein (426 aa).

4 disordered regions span residues 204–223, 234–256, 269–300, and 316–347; these read AQDE…TYGA, DESS…PVEL, LWGS…EELE, and SRSG…ASSA. Phosphoserine is present on residues S318 and S326.

The protein belongs to the SPATA2 family.

The chain is Spermatogenesis-associated protein 2-like protein from Mus musculus (Mouse).